We begin with the raw amino-acid sequence, 721 residues long: Cytosolic carboxypeptidase 2 (721 aa).

Residues 43 to 71 (TASDMINSSSPSESSDSNLEEEQEESKPC) form a disordered region. Positions 50 to 59 (SSSPSESSDS) are enriched in low complexity. One can recognise a Peptidase M14 domain in the interval 334–605 (YPYTYSKLQH…CFCDTLLDFC (272 aa)). 3 residues coordinate Zn(2+): H400, E403, and H496. The Proton donor/acceptor role is filled by E569. Residues 645–721 (DIESSTSGSN…TQHGDTEDQS (77 aa)) are disordered. A compositionally biased stretch (low complexity) spans 647-660 (ESSTSGSNSTESDG). Basic residues predominate over residues 672–688 (GKKKLLRSRKERNRLRQ). The segment covering 703-714 (YSCQTLNATTQH) has biased composition (polar residues).

It belongs to the peptidase M14 family. Zn(2+) serves as cofactor.

The protein resides in the cytoplasm. It is found in the cytosol. The protein localises to the cytoskeleton. Its subcellular location is the microtubule organizing center. It localises to the centrosome. The protein resides in the centriole. It is found in the cilium basal body. It catalyses the reaction (L-glutamyl)(n+1)-gamma-L-glutamyl-L-glutamyl-[protein] + H2O = (L-glutamyl)(n)-gamma-L-glutamyl-L-glutamyl-[protein] + L-glutamate. Its function is as follows. Metallocarboxypeptidase that mediates deglutamylation of target proteins. Catalyzes the deglutamylation of polyglutamate side chains generated by post-translational polyglutamylation in proteins such as tubulins. Also removes gene-encoded polyglutamates from the carboxy-terminus of target proteins such as MYLK. Does not show detyrosinase or deglycylase activities from the carboxy-terminus of tubulin. In terms of biological role, metallocarboxypeptidase that mediates deglutamylation of tubulin and non-tubulin target proteins. Catalyzes the removal of polyglutamate side chains present on the gamma-carboxyl group of glutamate residues within the C-terminal tail of tubulin protein. Specifically cleaves tubulin long-side-chains, while it is not able to remove the branching point glutamate. Also catalyzes the removal of polyglutamate residues from the carboxy-terminus of non-tubulin proteins. This is Cytosolic carboxypeptidase 2 (zte25) from Danio rerio (Zebrafish).